The following is a 347-amino-acid chain: Phenylalanine--tRNA ligase alpha subunit (347 aa).

Residue E261 coordinates Mg(2+).

Belongs to the class-II aminoacyl-tRNA synthetase family. Phe-tRNA synthetase alpha subunit type 1 subfamily. As to quaternary structure, tetramer of two alpha and two beta subunits. Mg(2+) serves as cofactor.

The protein resides in the cytoplasm. The enzyme catalyses tRNA(Phe) + L-phenylalanine + ATP = L-phenylalanyl-tRNA(Phe) + AMP + diphosphate + H(+). The chain is Phenylalanine--tRNA ligase alpha subunit from Streptococcus pyogenes serotype M3 (strain ATCC BAA-595 / MGAS315).